The following is a 204-amino-acid chain: Recombination protein RecR (204 aa).

A C4-type zinc finger spans residues 63 to 78; it reads CNRCFNITVEDPCTIC. Residues 86–181 enclose the Toprim domain; that stretch reads RQVCVVEEPL…RVTRLARGLP (96 aa).

It belongs to the RecR family.

In terms of biological role, may play a role in DNA repair. It seems to be involved in an RecBC-independent recombinational process of DNA repair. It may act with RecF and RecO. The sequence is that of Recombination protein RecR from Herpetosiphon aurantiacus (strain ATCC 23779 / DSM 785 / 114-95).